We begin with the raw amino-acid sequence, 342 residues long: tRNA N6-adenosine threonylcarbamoyltransferase (342 aa).

The Fe cation site is built by H111 and H115. Residues 134–138 (LVSGG), D167, G180, and N276 each bind substrate. Position 304 (D304) interacts with Fe cation.

It belongs to the KAE1 / TsaD family. Requires Fe(2+) as cofactor.

Its subcellular location is the cytoplasm. The catalysed reaction is L-threonylcarbamoyladenylate + adenosine(37) in tRNA = N(6)-L-threonylcarbamoyladenosine(37) in tRNA + AMP + H(+). Required for the formation of a threonylcarbamoyl group on adenosine at position 37 (t(6)A37) in tRNAs that read codons beginning with adenine. Is involved in the transfer of the threonylcarbamoyl moiety of threonylcarbamoyl-AMP (TC-AMP) to the N6 group of A37, together with TsaE and TsaB. TsaD likely plays a direct catalytic role in this reaction. This is tRNA N6-adenosine threonylcarbamoyltransferase from Helicobacter acinonychis (strain Sheeba).